The following is a 270-amino-acid chain: 4-hydroxy-tetrahydrodipicolinate reductase (270 aa).

Residues 8 to 13 (GALGRM), D34, 102 to 104 (GTT), and 128 to 131 (SQNY) each bind NAD(+). The Proton donor/acceptor role is filled by H160. H161 contacts (S)-2,3,4,5-tetrahydrodipicolinate. K164 (proton donor) is an active-site residue. (S)-2,3,4,5-tetrahydrodipicolinate is bound at residue 170–171 (GT).

It belongs to the DapB family.

The protein localises to the cytoplasm. The catalysed reaction is (S)-2,3,4,5-tetrahydrodipicolinate + NAD(+) + H2O = (2S,4S)-4-hydroxy-2,3,4,5-tetrahydrodipicolinate + NADH + H(+). It carries out the reaction (S)-2,3,4,5-tetrahydrodipicolinate + NADP(+) + H2O = (2S,4S)-4-hydroxy-2,3,4,5-tetrahydrodipicolinate + NADPH + H(+). The protein operates within amino-acid biosynthesis; L-lysine biosynthesis via DAP pathway; (S)-tetrahydrodipicolinate from L-aspartate: step 4/4. Functionally, catalyzes the conversion of 4-hydroxy-tetrahydrodipicolinate (HTPA) to tetrahydrodipicolinate. This is 4-hydroxy-tetrahydrodipicolinate reductase from Methanococcus maripaludis (strain C6 / ATCC BAA-1332).